The following is a 289-amino-acid chain: tRNA acetyltransferase TAN1 (289 aa).

Residues 1 to 10 (MGEKRNRNGK) are compositionally biased toward basic and acidic residues. Disordered regions lie at residues 1–31 (MGEKRNRNGKDANSQNRKKFKVSSGFLDPGT) and 64–83 (DIKEGEDESENDEKKDLSIE). Ser72 carries the post-translational modification Phosphoserine. One can recognise a THUMP domain in the interval 146–259 (ADPKNMVKRT…KSNIGMCVVD (114 aa)).

It localises to the cytoplasm. It is found in the nucleus. Its function is as follows. Probable tRNA acetyltransferase required for the formation of the modified nucleoside N(4)-acetylcytidine in serine and leucine tRNAs. Binds RNA. This is tRNA acetyltransferase TAN1 (TAN1) from Saccharomyces cerevisiae (strain ATCC 204508 / S288c) (Baker's yeast).